Reading from the N-terminus, the 108-residue chain is Ig kappa chain V-VI region NQ2-6.1 (108 aa).

The segment at 1 to 23 (QILLTQSPAIMSASPGQKVTMTC) is framework-1. C23 and C87 are oxidised to a cystine. Residues 24–33 (SASSSVSYMY) form a complementarity-determining-1 region. The interval 34–48 (WYQQKPGSSPRLLIY) is framework-2. The interval 49–55 (DTSNLAS) is complementarity-determining-2. The segment at 56-87 (GVPVRFSGSGSATSYSLTITRMQAEDAATYYC) is framework-3. A complementarity-determining-3 region spans residues 88–98 (QQWSSYPPMLT). The interval 99–108 (FGAGTKLELK) is framework-4.

The protein is Ig kappa chain V-VI region NQ2-6.1 of Mus musculus (Mouse).